A 428-amino-acid chain; its full sequence is CinA-like protein (428 aa).

This sequence belongs to the CinA family.

In Mycobacterium leprae (strain TN), this protein is CinA-like protein.